Here is a 77-residue protein sequence, read N- to C-terminus: Immune protein Tis1 (77 aa).

In terms of biological role, immunity protein that plays a role in preventing early activation of toxin Tas1. The sequence is that of Immune protein Tis1 (tis1) from Pseudomonas aeruginosa (strain UCBPP-PA14).